Here is a 129-residue protein sequence, read N- to C-terminus: MSYESGDFDRVVRFDNRLLGSVSHAPHIDTGSTPTGAAGRPQLSLVPDSFDVAPEAEEDQWQERALCAQTDPEAFFPEKGGSTREAKRICQGCEVRDACLEYALAHDERFGIWGGLSERERRRLKRGII.

The interval Ser-23–Leu-45 is disordered. The 58-residue stretch at Leu-66–Arg-123 folds into the 4Fe-4S Wbl-type domain. 4 residues coordinate [4Fe-4S] cluster: Cys-67, Cys-90, Cys-93, and Cys-99.

It belongs to the WhiB family. [4Fe-4S] cluster serves as cofactor. The Fe-S cluster can be nitrosylated by nitric oxide (NO). In terms of processing, upon Fe-S cluster removal intramolecular disulfide bonds are formed.

It localises to the cytoplasm. Its function is as follows. Acts as a transcriptional regulator. Probably redox-responsive. The apo- but not holo-form probably binds DNA. This is Transcriptional regulator WhiB2 (whiB2) from Mycolicibacterium smegmatis (strain ATCC 700084 / mc(2)155) (Mycobacterium smegmatis).